The sequence spans 518 residues: Cell wall biosynthesis protein LcpA (518 aa).

At 1 to 31 (MTEKYRPVRDIKPAPAAMQSTKQAGHPVFRS) the chain is on the cytoplasmic side. The helical transmembrane segment at 32 to 52 (VVAFVSVLVLLVSGLGYLAVG) threads the bilayer. Over 53–518 (KVDGVASGNL…AGGDGPRCVN (466 aa)) the chain is Periplasmic. Positions 485–518 (AVTSSTVGQPGADVGEPIESPEFDAGGDGPRCVN) are disordered.

Belongs to the LytR/CpsA/Psr (LCP) family. Forms homodimers and homotetramers.

The protein localises to the cell inner membrane. Its function is as follows. Involved in cell wall biosynthesis. May be responsible for the transfer of arabinogalactan onto peptidoglycan. In vitro, has pyrophosphatase activity. The protein is Cell wall biosynthesis protein LcpA of Corynebacterium glutamicum (strain ATCC 13032 / DSM 20300 / JCM 1318 / BCRC 11384 / CCUG 27702 / LMG 3730 / NBRC 12168 / NCIMB 10025 / NRRL B-2784 / 534).